A 171-amino-acid chain; its full sequence is Small ribosomal subunit protein uS4 (171 aa).

The 65-residue stretch at 101–165 (RRLQTVVYRK…SSLSDELHPE (65 aa)) folds into the S4 RNA-binding domain. Residues 148 to 171 (SSVGFDEHSSLSDELHPERAEAQE) form a disordered region. The segment covering 152 to 171 (FDEHSSLSDELHPERAEAQE) has biased composition (basic and acidic residues).

It belongs to the universal ribosomal protein uS4 family. Part of the 30S ribosomal subunit. Contacts protein S5. The interaction surface between S4 and S5 is involved in control of translational fidelity.

One of the primary rRNA binding proteins, it binds directly to 16S rRNA where it nucleates assembly of the body of the 30S subunit. In terms of biological role, with S5 and S12 plays an important role in translational accuracy. The sequence is that of Small ribosomal subunit protein uS4 from Haloarcula marismortui (strain ATCC 43049 / DSM 3752 / JCM 8966 / VKM B-1809) (Halobacterium marismortui).